The chain runs to 200 residues: V-set and transmembrane domain-containing protein 5 (200 aa).

The first 28 residues, 1 to 28 (MRPLPSGRRKTRGISLGLFALCLAAARC), serve as a signal peptide directing secretion. At 29 to 147 (LQSQGVSLYI…VSEILYEDLH (119 aa)) the chain is on the extracellular side. The Ig-like C2-type domain occupies 37 to 139 (YIPQATINAT…QFGTIVLHVS (103 aa)). Residue Asn102 is glycosylated (N-linked (GlcNAc...) asparagine). Residues 148–168 (FVAVILAFLAAVAAVLISLMW) traverse the membrane as a helical segment. Residues 169–200 (VCNKCAYKFQRKRRHKLKESTTEEIELEDVEC) are Cytoplasmic-facing. An important for CDC42-dependent filopodia induction region spans residues 170-186 (CNKCAYKFQRKRRHKLK).

As to quaternary structure, can homooligomerize through cis interactions within the same cell membrane. N-glycosylated.

The protein resides in the cell membrane. It localises to the cell projection. Its subcellular location is the dendrite. It is found in the axon. Its function is as follows. Cell adhesion-like membrane protein of the central nervous system (CNS) which modulates both the position and complexity of central neurons by altering their membrane morphology and dynamics. Involved in the formation of neuronal dendrites and protrusions including dendritic filopodia. In synaptogenesis, regulates synapse formation by altering dendritic spine morphology and actin distribution. Promotes formation of unstable neuronal spines such as thin and branched types. Regulates neuronal morphogenesis and migration during cortical development in the brain. The protein is V-set and transmembrane domain-containing protein 5 (VSTM5) of Homo sapiens (Human).